Here is a 293-residue protein sequence, read N- to C-terminus: Ribosomal RNA small subunit methyltransferase A (293 aa).

Residues Asn29, Leu31, Gly56, Glu77, Asp102, and Asn127 each contribute to the S-adenosyl-L-methionine site.

Belongs to the class I-like SAM-binding methyltransferase superfamily. rRNA adenine N(6)-methyltransferase family. RsmA subfamily.

The protein localises to the cytoplasm. It catalyses the reaction adenosine(1518)/adenosine(1519) in 16S rRNA + 4 S-adenosyl-L-methionine = N(6)-dimethyladenosine(1518)/N(6)-dimethyladenosine(1519) in 16S rRNA + 4 S-adenosyl-L-homocysteine + 4 H(+). In terms of biological role, specifically dimethylates two adjacent adenosines (A1518 and A1519) in the loop of a conserved hairpin near the 3'-end of 16S rRNA in the 30S particle. May play a critical role in biogenesis of 30S subunits. The chain is Ribosomal RNA small subunit methyltransferase A from Geobacillus thermodenitrificans (strain NG80-2).